Reading from the N-terminus, the 179-residue chain is Ribosome maturation factor RimM (179 aa).

In terms of domain architecture, PRC barrel spans 100–176 (HGEYHLTELI…FILLTPPSGL (77 aa)).

The protein belongs to the RimM family. Binds ribosomal protein uS19.

It is found in the cytoplasm. An accessory protein needed during the final step in the assembly of 30S ribosomal subunit, possibly for assembly of the head region. Essential for efficient processing of 16S rRNA. May be needed both before and after RbfA during the maturation of 16S rRNA. It has affinity for free ribosomal 30S subunits but not for 70S ribosomes. The sequence is that of Ribosome maturation factor RimM from Prochlorococcus marinus subsp. pastoris (strain CCMP1986 / NIES-2087 / MED4).